A 216-amino-acid polypeptide reads, in one-letter code: Thymidine kinase (216 aa).

ATP contacts are provided by residues 9–16 and 86–89; these read GTMDCGKS and DEAQ. Residue Glu87 is the Proton acceptor of the active site.

Belongs to the thymidine kinase family. As to quaternary structure, homotetramer.

It localises to the cytoplasm. The enzyme catalyses thymidine + ATP = dTMP + ADP + H(+). The protein is Thymidine kinase of Streptomyces coelicolor (strain ATCC BAA-471 / A3(2) / M145).